Reading from the N-terminus, the 163-residue chain is D-aminoacyl-tRNA deacylase (163 aa).

The Gly-cisPro motif, important for rejection of L-amino acids motif lies at 141–142 (GP).

Belongs to the DTD family. As to quaternary structure, homodimer.

The protein resides in the cytoplasm. It carries out the reaction glycyl-tRNA(Ala) + H2O = tRNA(Ala) + glycine + H(+). The catalysed reaction is a D-aminoacyl-tRNA + H2O = a tRNA + a D-alpha-amino acid + H(+). Its function is as follows. An aminoacyl-tRNA editing enzyme that deacylates mischarged D-aminoacyl-tRNAs. Also deacylates mischarged glycyl-tRNA(Ala), protecting cells against glycine mischarging by AlaRS. Acts via tRNA-based rather than protein-based catalysis; rejects L-amino acids rather than detecting D-amino acids in the active site. By recycling D-aminoacyl-tRNA to D-amino acids and free tRNA molecules, this enzyme counteracts the toxicity associated with the formation of D-aminoacyl-tRNA entities in vivo and helps enforce protein L-homochirality. This Neisseria gonorrhoeae (strain ATCC 700825 / FA 1090) protein is D-aminoacyl-tRNA deacylase.